Consider the following 179-residue polypeptide: Inosine/xanthosine triphosphatase (179 aa).

A substrate-binding site is contributed by 8–13; the sequence is TTNPAK. Residues aspartate 38 and glutamate 68 each coordinate Mg(2+). 68-69 serves as a coordination point for substrate; the sequence is EA.

It belongs to the YjjX NTPase family. In terms of assembly, homodimer. Mg(2+) serves as cofactor. The cofactor is Mn(2+).

The catalysed reaction is XTP + H2O = XDP + phosphate + H(+). The enzyme catalyses ITP + H2O = IDP + phosphate + H(+). In terms of biological role, phosphatase that hydrolyzes non-canonical purine nucleotides such as XTP and ITP to their respective diphosphate derivatives. Probably excludes non-canonical purines from DNA/RNA precursor pool, thus preventing their incorporation into DNA/RNA and avoiding chromosomal lesions. This Proteus mirabilis (strain HI4320) protein is Inosine/xanthosine triphosphatase.